Consider the following 160-residue polypeptide: Transcription elongation factor GreA (160 aa).

Residues 2–84 (KNTVNDKILL…SKAKIIKADL (83 aa)) adopt a coiled-coil conformation.

Belongs to the GreA/GreB family.

Necessary for efficient RNA polymerase transcription elongation past template-encoded arresting sites. The arresting sites in DNA have the property of trapping a certain fraction of elongating RNA polymerases that pass through, resulting in locked ternary complexes. Cleavage of the nascent transcript by cleavage factors such as GreA or GreB allows the resumption of elongation from the new 3'terminus. GreA releases sequences of 2 to 3 nucleotides. The protein is Transcription elongation factor GreA of Mesomycoplasma hyopneumoniae (strain 232) (Mycoplasma hyopneumoniae).